The following is a 184-amino-acid chain: J-type co-chaperone JAC1, mitochondrial (184 aa).

A mitochondrion-targeting transit peptide spans 1 to 10 (MLKYLVQRRF). The region spanning 13–82 (TFYELFPKTF…LRRSQYMLKL (70 aa)) is the J domain. Residues 48-50 (HPD) carry the HSP70 binding motif. An interaction with ISU1 region spans residues 71–184 (DPLRRSQYML…APGKQLEMNH (114 aa)).

It belongs to the HscB family. As to quaternary structure, interacts with ISU1 and SSQ1.

Its subcellular location is the mitochondrion matrix. Co-chaperone required for the assembly of iron-sulfur (Fe/S) clusters in mitochondria. Stimulates the ATPase activity of its specialized Hsp70 chaperone partner SSQ1, to mediate the transfer of iron-sulfur clusters from ISU1 to GRX5. Binds to the substrate protein ISU1 and targets it to SSQ1. This is J-type co-chaperone JAC1, mitochondrial from Saccharomyces cerevisiae (strain ATCC 204508 / S288c) (Baker's yeast).